We begin with the raw amino-acid sequence, 208 residues long: ATP-dependent dethiobiotin synthetase BioD (208 aa).

11–16 (EVGKTF) provides a ligand contact to ATP. T15 contacts Mg(2+). K31 is an active-site residue. S35 provides a ligand contact to substrate. Residues D42, 95 to 98 (ETSG), and 155 to 156 (NQ) contribute to the ATP site. The Mg(2+) site is built by D42 and E95.

The protein belongs to the dethiobiotin synthetase family. In terms of assembly, homodimer. Mg(2+) is required as a cofactor.

The protein localises to the cytoplasm. It carries out the reaction (7R,8S)-7,8-diammoniononanoate + CO2 + ATP = (4R,5S)-dethiobiotin + ADP + phosphate + 3 H(+). It participates in cofactor biosynthesis; biotin biosynthesis; biotin from 7,8-diaminononanoate: step 1/2. Functionally, catalyzes a mechanistically unusual reaction, the ATP-dependent insertion of CO2 between the N7 and N8 nitrogen atoms of 7,8-diaminopelargonic acid (DAPA, also called 7,8-diammoniononanoate) to form a ureido ring. The sequence is that of ATP-dependent dethiobiotin synthetase BioD from Chlamydia felis (strain Fe/C-56) (Chlamydophila felis).